Reading from the N-terminus, the 411-residue chain is Arginine deiminase (411 aa).

Cysteine 401 serves as the catalytic Amidino-cysteine intermediate.

It belongs to the arginine deiminase family.

The protein resides in the cytoplasm. The enzyme catalyses L-arginine + H2O = L-citrulline + NH4(+). It functions in the pathway amino-acid degradation; L-arginine degradation via ADI pathway; carbamoyl phosphate from L-arginine: step 1/2. The polypeptide is Arginine deiminase (Staphylococcus epidermidis (strain ATCC 35984 / DSM 28319 / BCRC 17069 / CCUG 31568 / BM 3577 / RP62A)).